Here is a 394-residue protein sequence, read N- to C-terminus: Elongation factor Tu (394 aa).

The tr-type G domain occupies 10 to 205 (KPHMNVGTIG…TMDSYFDLPE (196 aa)). The segment at 19–26 (GHVDHGKT) is G1. GTP is bound at residue 19–26 (GHVDHGKT). Mg(2+) is bound at residue T26. Residues 61–65 (GITIN) are G2. The tract at residues 82 to 85 (DCPG) is G3. Residues 82 to 86 (DCPGH) and 137 to 140 (NKLD) each bind GTP. Residues 137–140 (NKLD) form a G4 region. The G5 stretch occupies residues 173 to 175 (SAF).

This sequence belongs to the TRAFAC class translation factor GTPase superfamily. Classic translation factor GTPase family. EF-Tu/EF-1A subfamily. As to quaternary structure, monomer.

It is found in the cytoplasm. The catalysed reaction is GTP + H2O = GDP + phosphate + H(+). In terms of biological role, GTP hydrolase that promotes the GTP-dependent binding of aminoacyl-tRNA to the A-site of ribosomes during protein biosynthesis. The protein is Elongation factor Tu of Borrelia hermsii (strain HS1 / DAH).